We begin with the raw amino-acid sequence, 968 residues long: Angiomotin-like protein 1 (968 aa).

Polar residues-rich tracts occupy residues 152–164 (VYQS…QGQE) and 177–187 (RSTQPQQNNEE). Positions 152 to 258 (VYQSARQEPQ…NRANSGQAHK (107 aa)) are disordered. Low complexity predominate over residues 203–224 (GQQQQQQQQQQQQQQQQQQGQG). 3 positions are modified to phosphoserine: Ser-253, Ser-281, and Ser-307. Residues 271 to 291 (RSLSERIMQLSLERNGAKQHL) are a coiled coil. A disordered region spans residues 285–343 (NGAKQHLPSSGNGKSFKAGGEPSPAQPVCKALDPRGPPPEYPFKTKPMKSPVSKNQDHG). Coiled coils occupy residues 449 to 645 (VERA…RRLR) and 676 to 705 (ALME…YLEE). The segment at 721-742 (AERDTTISNHSRNGSYGESSLE) is disordered. The segment covering 726–738 (TISNHSRNGSYGE) has biased composition (polar residues). Residue Ser-731 is modified to Phosphoserine. Residues 748-773 (EEEEVVQANRRCQDMEYTIKNLHAKI) adopt a coiled-coil conformation. The disordered stretch occupies residues 785–834 (QRSRKDAGKTDSASLRPARSVPSIAAATGTHSRQTSLTSSQLTEEKKEEK). Ser-804, Ser-816, and Ser-840 each carry phosphoserine. Over residues 853 to 878 (ASAPLLPTTPASALSLPASTTSASST) the composition is skewed to low complexity. The disordered stretch occupies residues 853-956 (ASAPLLPTTP…GRVSNLLHKP (104 aa)). Residues Ser-912 and Ser-918 each carry the phosphoserine modification. A PDZ-binding motif is present at residues 965-968 (EVLI).

The protein belongs to the angiomotin family. Post-translationally, polyubiquitinated by NEDD4, leading to proteasomal degradation. In terms of tissue distribution, expressed in exocrine glands, including pancreas, submandibular gland, lacrimal gland, parotid gland and sublingual gland (at protein level).

Its subcellular location is the cell junction. The protein localises to the tight junction. Inhibits the Wnt/beta-catenin signaling pathway, probably by recruiting CTNNB1 to recycling endosomes and hence preventing its translocation to the nucleus. This Mus musculus (Mouse) protein is Angiomotin-like protein 1 (Amotl1).